The following is a 152-amino-acid chain: D-aminoacyl-tRNA deacylase (152 aa).

The Gly-cisPro motif, important for rejection of L-amino acids signature appears at 138 to 139; sequence GP.

Belongs to the DTD family. Homodimer.

It localises to the cytoplasm. It catalyses the reaction glycyl-tRNA(Ala) + H2O = tRNA(Ala) + glycine + H(+). It carries out the reaction a D-aminoacyl-tRNA + H2O = a tRNA + a D-alpha-amino acid + H(+). Functionally, an aminoacyl-tRNA editing enzyme that deacylates mischarged D-aminoacyl-tRNAs. Also deacylates mischarged glycyl-tRNA(Ala), protecting cells against glycine mischarging by AlaRS. Acts via tRNA-based rather than protein-based catalysis; rejects L-amino acids rather than detecting D-amino acids in the active site. By recycling D-aminoacyl-tRNA to D-amino acids and free tRNA molecules, this enzyme counteracts the toxicity associated with the formation of D-aminoacyl-tRNA entities in vivo and helps enforce protein L-homochirality. This Chloroherpeton thalassium (strain ATCC 35110 / GB-78) protein is D-aminoacyl-tRNA deacylase.